The following is a 994-amino-acid chain: Regulator of telomere elongation helicase 1 homolog (994 aa).

The region spanning 15 to 300 (PKLSVKFPFE…EETARSEADA (286 aa)) is the Helicase ATP-binding domain. 50 to 57 (SPTGTGKT) is an ATP binding site. [4Fe-4S] cluster-binding residues include C142, C160, C169, and C208. A DEAH box motif is present at residues 251 to 254 (DEAH). Residues 876–895 (FKIETPGPSTSTLTQKSEPP) are disordered. A compositionally biased stretch (polar residues) spans 882-892 (GPSTSTLTQKS).

It belongs to the helicase family. RAD3/XPD subfamily.

It is found in the nucleus. The catalysed reaction is ATP + H2O = ADP + phosphate + H(+). Its function is as follows. A probable ATP-dependent DNA helicase implicated in DNA repair and the maintenance of genomic stability. Acts as an anti-recombinase to counteract toxic recombination and limit crossover during meiosis. Regulates meiotic recombination and crossover homeostasis by physically dissociating strand invasion events and thereby promotes noncrossover repair by meiotic synthesis dependent strand annealing (SDSA) as well as disassembly of D loop recombination intermediates. The polypeptide is Regulator of telomere elongation helicase 1 homolog (Caenorhabditis elegans).